The following is a 429-amino-acid chain: S-adenosylmethionine synthase (429 aa).

Position 9 (glutamate 9) interacts with Mg(2+). An ATP-binding site is contributed by histidine 15. Glutamate 43 is a K(+) binding site. Positions 56 and 99 each coordinate L-methionine. ATP is bound by residues 167-169 (DGK), 235-238 (SGRF), aspartate 246, 252-253 (RK), alanine 269, lysine 273, and lysine 277. Aspartate 246 lines the L-methionine pocket. Lysine 277 lines the L-methionine pocket.

This sequence belongs to the AdoMet synthase family. In terms of assembly, homotetramer. It depends on Mn(2+) as a cofactor. The cofactor is Mg(2+). Co(2+) is required as a cofactor. Requires K(+) as cofactor.

The protein localises to the cytoplasm. It carries out the reaction L-methionine + ATP + H2O = S-adenosyl-L-methionine + phosphate + diphosphate. The protein operates within amino-acid biosynthesis; S-adenosyl-L-methionine biosynthesis; S-adenosyl-L-methionine from L-methionine: step 1/1. Its function is as follows. Catalyzes the formation of S-adenosylmethionine from methionine and ATP. The reaction comprises two steps that are both catalyzed by the same enzyme: formation of S-adenosylmethionine (AdoMet) and triphosphate, and subsequent hydrolysis of the triphosphate. The chain is S-adenosylmethionine synthase (SAMS) from Carica papaya (Papaya).